Reading from the N-terminus, the 411-residue chain is Serine hydroxymethyltransferase (411 aa).

(6S)-5,6,7,8-tetrahydrofolate-binding positions include L113 and 117 to 119 (GHL). K222 carries the N6-(pyridoxal phosphate)lysine modification. (6S)-5,6,7,8-tetrahydrofolate is bound by residues E238 and 346–348 (SPF).

This sequence belongs to the SHMT family. Homodimer. The cofactor is pyridoxal 5'-phosphate.

It localises to the cytoplasm. The enzyme catalyses (6R)-5,10-methylene-5,6,7,8-tetrahydrofolate + glycine + H2O = (6S)-5,6,7,8-tetrahydrofolate + L-serine. It participates in one-carbon metabolism; tetrahydrofolate interconversion. It functions in the pathway amino-acid biosynthesis; glycine biosynthesis; glycine from L-serine: step 1/1. Catalyzes the reversible interconversion of serine and glycine with tetrahydrofolate (THF) serving as the one-carbon carrier. This reaction serves as the major source of one-carbon groups required for the biosynthesis of purines, thymidylate, methionine, and other important biomolecules. Also exhibits THF-independent aldolase activity toward beta-hydroxyamino acids, producing glycine and aldehydes, via a retro-aldol mechanism. The chain is Serine hydroxymethyltransferase from Prochlorococcus marinus (strain NATL1A).